Consider the following 350-residue polypeptide: Glycolate oxidase subunit GlcE (350 aa).

The region spanning 1–173 (MLRECDYSQA…TEISMKVLPR (173 aa)) is the FAD-binding PCMH-type domain.

As to quaternary structure, the glycolate oxidase likely consists of three subunits, GlcD, GlcE and GlcF. It depends on FAD as a cofactor.

The protein localises to the cell inner membrane. The catalysed reaction is glycolate + A = glyoxylate + AH2. It carries out the reaction (R)-lactate + A = pyruvate + AH2. In vitro the glycolate oxidase activity is inhibited by the sulfhydryl inhibitors CuSO4 and PCMB, by KCN, but not by the metal complexing agent EDTA. In terms of biological role, component of a complex that catalyzes the oxidation of glycolate to glyoxylate. Is required for E.coli to grow on glycolate as a sole source of carbon. Is also able to oxidize D-lactate ((R)-lactate) with a similar rate. Does not link directly to O(2), and 2,6-dichloroindophenol (DCIP) and phenazine methosulfate (PMS) can act as artificial electron acceptors in vitro, but the physiological molecule that functions as a primary electron acceptor during glycolate oxidation is unknown. This is Glycolate oxidase subunit GlcE from Escherichia coli (strain K12).